We begin with the raw amino-acid sequence, 309 residues long: 2-phospho-L-lactate transferase (309 aa).

2 residues coordinate 7,8-didemethyl-8-hydroxy-5-deazariboflavin: Asp-50 and Arg-89.

The protein belongs to the CofD family. Homodimer. Mg(2+) serves as cofactor.

It carries out the reaction (2S)-lactyl-2-diphospho-5'-guanosine + 7,8-didemethyl-8-hydroxy-5-deazariboflavin = oxidized coenzyme F420-0 + GMP + H(+). It functions in the pathway cofactor biosynthesis; coenzyme F420 biosynthesis. Its function is as follows. Catalyzes the transfer of the 2-phospholactate moiety from (2S)-lactyl-2-diphospho-5'-guanosine to 7,8-didemethyl-8-hydroxy-5-deazariboflavin (FO) with the formation of oxidized coenzyme F420-0 and GMP. This is 2-phospho-L-lactate transferase from Methanococcus maripaludis (strain DSM 14266 / JCM 13030 / NBRC 101832 / S2 / LL).